A 660-amino-acid polypeptide reads, in one-letter code: tRNA 5-methylaminomethyl-2-thiouridine biosynthesis bifunctional protein MnmC (660 aa).

Residues 1–235 (MTITRHARID…KWEVLRGAFI (235 aa)) are tRNA (mnm(5)s(2)U34)-methyltransferase. The tract at residues 266–660 (IGAGLAGCAT…LRGLIRGGGK (395 aa)) is FAD-dependent cmnm(5)s(2)U34 oxidoreductase.

The protein in the N-terminal section; belongs to the methyltransferase superfamily. tRNA (mnm(5)s(2)U34)-methyltransferase family. It in the C-terminal section; belongs to the DAO family. FAD serves as cofactor.

It localises to the cytoplasm. The catalysed reaction is 5-aminomethyl-2-thiouridine(34) in tRNA + S-adenosyl-L-methionine = 5-methylaminomethyl-2-thiouridine(34) in tRNA + S-adenosyl-L-homocysteine + H(+). Catalyzes the last two steps in the biosynthesis of 5-methylaminomethyl-2-thiouridine (mnm(5)s(2)U) at the wobble position (U34) in tRNA. Catalyzes the FAD-dependent demodification of cmnm(5)s(2)U34 to nm(5)s(2)U34, followed by the transfer of a methyl group from S-adenosyl-L-methionine to nm(5)s(2)U34, to form mnm(5)s(2)U34. This Pseudomonas syringae pv. tomato (strain ATCC BAA-871 / DC3000) protein is tRNA 5-methylaminomethyl-2-thiouridine biosynthesis bifunctional protein MnmC.